The sequence spans 435 residues: MTDLTPREIVSELDRFIIGQNDAKRAVAVALRNRWRRKQLADDLRDEVYPKNILMIGPTGVGKTEISRRLAKLARAPFLKVEATKFTEVGYVGRDVEQIIRDLVDNAISMTRDHMRDDVKANAHQAAEERVITAIAGEDARESTREMFRKKLKAGDLDDTVIELDVADTSSPFPMMDIPGQPGGNMGMMNLGDIFGKALGGRTTRKKMTVSQSYDILIGEEADKLLDDETVNRAAIEAVEQNGIVFLDEIDKVCAKSDTRGGDVSREGVQRDLLPLIEGTTVSTKHGPIKTDHILFIASGAFHIAKPSDLLPELQGRLPIRVELRALTEEDFVRILTETDNALTLQYTALMGTEEVTVSFTEDGIAALAKIAAEVNQSVENIGARRLYTVMERVFEELSFSAPDRAGEEIIVDAAFVDENLGALAKSTDVSRYVL.

ATP contacts are provided by residues isoleucine 18, 60–65 (GVGKTE), aspartate 248, glutamate 313, and arginine 385.

Belongs to the ClpX chaperone family. HslU subfamily. As to quaternary structure, a double ring-shaped homohexamer of HslV is capped on each side by a ring-shaped HslU homohexamer. The assembly of the HslU/HslV complex is dependent on binding of ATP.

It is found in the cytoplasm. Functionally, ATPase subunit of a proteasome-like degradation complex; this subunit has chaperone activity. The binding of ATP and its subsequent hydrolysis by HslU are essential for unfolding of protein substrates subsequently hydrolyzed by HslV. HslU recognizes the N-terminal part of its protein substrates and unfolds these before they are guided to HslV for hydrolysis. The sequence is that of ATP-dependent protease ATPase subunit HslU from Roseobacter denitrificans (strain ATCC 33942 / OCh 114) (Erythrobacter sp. (strain OCh 114)).